Reading from the N-terminus, the 145-residue chain is UPF0179 protein Msm_0285 (145 aa).

The protein belongs to the UPF0179 family.

In Methanobrevibacter smithii (strain ATCC 35061 / DSM 861 / OCM 144 / PS), this protein is UPF0179 protein Msm_0285.